Consider the following 303-residue polypeptide: DnaJ homolog subfamily C member 17 (303 aa).

The J domain maps to 11-76 (DLYALLGIEE…AARAAYDKVR (66 aa)). Composition is skewed to basic and acidic residues over residues 78–106 (ARKQ…RERQ) and 150–166 (IRQD…ENTE). Disordered stretches follow at residues 78 to 124 (ARKQ…TTTL) and 150 to 170 (IRQD…GKGT). The RRM domain occupies 178 to 249 (KCKKEDESQG…NPLKVSWLEG (72 aa)). Position 264 is an N6-methyllysine (lysine 264).

The protein resides in the cytoplasm. It localises to the nucleus. In terms of biological role, may negatively affect PAX8-induced thyroglobulin/TG transcription. This chain is DnaJ homolog subfamily C member 17 (Dnajc17), found in Rattus norvegicus (Rat).